The sequence spans 653 residues: 2-oxoglutarate oxidoreductase subunit KorA (653 aa).

Residues 1–21 (MDPNGSGAGPESHDAAFHAAP) are disordered. Positions 11 to 21 (ESHDAAFHAAP) are enriched in basic and acidic residues.

As to quaternary structure, KG oxidoreductase (KOR) is composed of KorA and KorB subunits.

The catalysed reaction is 2 oxidized [2Fe-2S]-[ferredoxin] + 2-oxoglutarate + CoA = succinyl-CoA + 2 reduced [2Fe-2S]-[ferredoxin] + CO2 + H(+). Its pathway is carbohydrate metabolism; tricarboxylic acid cycle. In terms of biological role, component of KG oxidoreductase (KOR) that catalyzes the CoA-dependent oxidative decarboxylation of 2-oxoglutarate (alpha-ketoglutarate, KG) to succinyl-CoA. Methyl viologen can act as electron acceptor in vitro; the physiologic electron acceptor is unknown. Is involved in the alternative TCA pathway that functions concurrently with fatty acid beta-oxidation. Since a growing body of evidence indicates that lipids (for example cholesterol and fatty acids) are a predominant growth substrate for M.tuberculosis during infection, flux through KOR likely represents an important step in intermediary metabolism in vivo. KOR-dependent decarboxylation of KG also appears to be an important source of CO(2) in M.tuberculosis metabolism. The chain is 2-oxoglutarate oxidoreductase subunit KorA (korA) from Mycobacterium tuberculosis (strain ATCC 25618 / H37Rv).